A 184-amino-acid chain; its full sequence is Ribosome-recycling factor (184 aa).

Belongs to the RRF family.

It localises to the cytoplasm. In terms of biological role, responsible for the release of ribosomes from messenger RNA at the termination of protein biosynthesis. May increase the efficiency of translation by recycling ribosomes from one round of translation to another. The protein is Ribosome-recycling factor of Bifidobacterium animalis subsp. lactis (strain AD011).